We begin with the raw amino-acid sequence, 692 residues long: Mitogen-activated protein kinase kinase kinase 7-interacting protein 3 homolog (692 aa).

In terms of domain architecture, CUE spans 8–51 (LDIQVLNDLQQRFPEIPRDVVSQCMLQNNSNLDACYRALTQESC). Disordered stretches follow at residues 138–159 (NDQN…GVGT), 206–333 (YGTP…PYGP), and 349–427 (SQQR…VVMS). Composition is skewed to polar residues over residues 215 to 230 (PSQN…NTAW), 249 to 298 (QSFQ…QTSH), and 349 to 387 (SQQR…SGSP). The segment covering 409–422 (SQPPTTTGSPTPSS) has biased composition (low complexity). The stretch at 496-580 (ALLLHQRARM…QKEIDLLQSR (85 aa)) forms a coiled coil. The segment at 598–662 (SPGPAVPPNT…SPRPGRDEDF (65 aa)) is disordered. Residues 608-620 (CKKESSETTSGER) show a composition bias toward basic and acidic residues. The segment at 662–692 (FEGSPWNCNSCTFLNHPALNRCEQCEMPRFT) adopts a RanBP2-type zinc-finger fold.

Its function is as follows. May play a role in signaling pathway. This is Mitogen-activated protein kinase kinase kinase 7-interacting protein 3 homolog (map3k7ip3) from Xenopus laevis (African clawed frog).